An 82-amino-acid polypeptide reads, in one-letter code: Toxin TdNa6 (82 aa).

The signal sequence occupies residues 1-20 (MKGMIMLISCLMLIEVVVGG). One can recognise an LCN-type CS-alpha/beta domain in the interval 21 to 82 (KEGYLLDRSN…KMWHLKTNKC (62 aa)). 4 disulfides stabilise this stretch: Cys32–Cys82, Cys36–Cys58, Cys44–Cys63, and Cys48–Cys65.

Belongs to the long (4 C-C) scorpion toxin superfamily. Sodium channel inhibitor family. Beta subfamily. Expressed by the venom gland.

It is found in the secreted. Its function is as follows. Beta toxins bind voltage-independently at site-4 of sodium channels (Nav) and shift the voltage of activation toward more negative potentials thereby affecting sodium channel activation and promoting spontaneous and repetitive firing. Is toxic to arthropods. The chain is Toxin TdNa6 from Tityus discrepans (Venezuelan scorpion).